Reading from the N-terminus, the 439-residue chain is 3-phosphoshikimate 1-carboxyvinyltransferase (439 aa).

Residues Lys-27, Ser-28, and Arg-32 each contribute to the 3-phosphoshikimate site. Lys-27 lines the phosphoenolpyruvate pocket. The phosphoenolpyruvate site is built by Gly-101 and Arg-130. 3-phosphoshikimate-binding residues include Ser-175, Gln-177, Asp-326, and Lys-353. Phosphoenolpyruvate is bound at residue Gln-177. The Proton acceptor role is filled by Asp-326. Arg-357 and Arg-399 together coordinate phosphoenolpyruvate.

This sequence belongs to the EPSP synthase family. As to quaternary structure, monomer.

It is found in the cytoplasm. It carries out the reaction 3-phosphoshikimate + phosphoenolpyruvate = 5-O-(1-carboxyvinyl)-3-phosphoshikimate + phosphate. It functions in the pathway metabolic intermediate biosynthesis; chorismate biosynthesis; chorismate from D-erythrose 4-phosphate and phosphoenolpyruvate: step 6/7. Its function is as follows. Catalyzes the transfer of the enolpyruvyl moiety of phosphoenolpyruvate (PEP) to the 5-hydroxyl of shikimate-3-phosphate (S3P) to produce enolpyruvyl shikimate-3-phosphate and inorganic phosphate. This is 3-phosphoshikimate 1-carboxyvinyltransferase from Synechococcus sp. (strain WH7803).